Consider the following 158-residue polypeptide: SsrA-binding protein (158 aa).

Belongs to the SmpB family.

The protein localises to the cytoplasm. In terms of biological role, required for rescue of stalled ribosomes mediated by trans-translation. Binds to transfer-messenger RNA (tmRNA), required for stable association of tmRNA with ribosomes. tmRNA and SmpB together mimic tRNA shape, replacing the anticodon stem-loop with SmpB. tmRNA is encoded by the ssrA gene; the 2 termini fold to resemble tRNA(Ala) and it encodes a 'tag peptide', a short internal open reading frame. During trans-translation Ala-aminoacylated tmRNA acts like a tRNA, entering the A-site of stalled ribosomes, displacing the stalled mRNA. The ribosome then switches to translate the ORF on the tmRNA; the nascent peptide is terminated with the 'tag peptide' encoded by the tmRNA and targeted for degradation. The ribosome is freed to recommence translation, which seems to be the essential function of trans-translation. The polypeptide is SsrA-binding protein (Glaesserella parasuis serovar 5 (strain SH0165) (Haemophilus parasuis)).